The primary structure comprises 91 residues: UPF0298 protein spyM18_0447 (91 aa).

This sequence belongs to the UPF0298 family.

The protein resides in the cytoplasm. The chain is UPF0298 protein spyM18_0447 from Streptococcus pyogenes serotype M18 (strain MGAS8232).